Reading from the N-terminus, the 169-residue chain is Ureidoglycolate lyase (169 aa).

It belongs to the ureidoglycolate lyase family. In terms of assembly, homodimer. Ni(2+) serves as cofactor.

The catalysed reaction is (S)-ureidoglycolate = urea + glyoxylate. It participates in nitrogen metabolism; (S)-allantoin degradation. Its function is as follows. Catalyzes the catabolism of the allantoin degradation intermediate (S)-ureidoglycolate, generating urea and glyoxylate. Involved in the utilization of allantoin as nitrogen source. The polypeptide is Ureidoglycolate lyase (Pseudomonas paraeruginosa (strain DSM 24068 / PA7) (Pseudomonas aeruginosa (strain PA7))).